Reading from the N-terminus, the 335-residue chain is Malate dehydrogenase 1 (335 aa).

NAD(+)-binding positions include 11–16 (GAGNVG) and D35. R97 and R103 together coordinate substrate. NAD(+)-binding positions include N110 and 133–135 (VTN). The substrate site is built by N135 and R166. The Proton acceptor role is filled by H190.

This sequence belongs to the LDH/MDH superfamily. MDH type 3 family.

The catalysed reaction is (S)-malate + NAD(+) = oxaloacetate + NADH + H(+). In terms of biological role, catalyzes the reversible oxidation of malate to oxaloacetate. This chain is Malate dehydrogenase 1 (mdh1), found in Aquifex aeolicus (strain VF5).